The chain runs to 95 residues: Small ribosomal subunit protein bS18 (95 aa).

Belongs to the bacterial ribosomal protein bS18 family. As to quaternary structure, part of the 30S ribosomal subunit. Forms a tight heterodimer with protein bS6.

Binds as a heterodimer with protein bS6 to the central domain of the 16S rRNA, where it helps stabilize the platform of the 30S subunit. The sequence is that of Small ribosomal subunit protein bS18 from Rickettsia massiliae (strain Mtu5).